Here is a 404-residue protein sequence, read N- to C-terminus: Glucose-1-phosphate adenylyltransferase (404 aa).

Alpha-D-glucose 1-phosphate is bound by residues Tyr-99, Gly-164, 179-180, and Ser-197; that span reads EK.

The protein belongs to the bacterial/plant glucose-1-phosphate adenylyltransferase family. In terms of assembly, homotetramer.

The enzyme catalyses alpha-D-glucose 1-phosphate + ATP + H(+) = ADP-alpha-D-glucose + diphosphate. Its pathway is glycan biosynthesis; glycogen biosynthesis. Functionally, involved in the biosynthesis of ADP-glucose, a building block required for the elongation reactions to produce glycogen. Catalyzes the reaction between ATP and alpha-D-glucose 1-phosphate (G1P) to produce pyrophosphate and ADP-Glc. The polypeptide is Glucose-1-phosphate adenylyltransferase (Rhodococcus jostii (strain RHA1)).